The primary structure comprises 217 residues: Cytidylate kinase (217 aa).

10–18 (GPAGAGKST) serves as a coordination point for ATP.

This sequence belongs to the cytidylate kinase family. Type 1 subfamily.

It localises to the cytoplasm. It catalyses the reaction CMP + ATP = CDP + ADP. It carries out the reaction dCMP + ATP = dCDP + ADP. The polypeptide is Cytidylate kinase (Clostridium botulinum (strain Loch Maree / Type A3)).